The primary structure comprises 400 residues: 1-deoxy-D-xylulose 5-phosphate reductoisomerase (400 aa).

NADPH is bound by residues T17, G18, S19, I20, and N131. K132 contacts 1-deoxy-D-xylulose 5-phosphate. E133 provides a ligand contact to NADPH. Mn(2+) is bound at residue D157. Positions 158, 159, 188, and 211 each coordinate 1-deoxy-D-xylulose 5-phosphate. E159 contributes to the Mn(2+) binding site. G217 contributes to the NADPH binding site. S224, N229, K230, and E233 together coordinate 1-deoxy-D-xylulose 5-phosphate. Residue E233 participates in Mn(2+) binding.

The protein belongs to the DXR family. Requires Mg(2+) as cofactor. It depends on Mn(2+) as a cofactor.

It catalyses the reaction 2-C-methyl-D-erythritol 4-phosphate + NADP(+) = 1-deoxy-D-xylulose 5-phosphate + NADPH + H(+). The protein operates within isoprenoid biosynthesis; isopentenyl diphosphate biosynthesis via DXP pathway; isopentenyl diphosphate from 1-deoxy-D-xylulose 5-phosphate: step 1/6. Its function is as follows. Catalyzes the NADPH-dependent rearrangement and reduction of 1-deoxy-D-xylulose-5-phosphate (DXP) to 2-C-methyl-D-erythritol 4-phosphate (MEP). This chain is 1-deoxy-D-xylulose 5-phosphate reductoisomerase, found in Pseudomonas putida (strain ATCC 47054 / DSM 6125 / CFBP 8728 / NCIMB 11950 / KT2440).